The sequence spans 151 residues: MLNCQNNASLGLDLGEKTLGIALSQTGIIAQNLKTIFFDTHKYDQLIAPLQKIISQYQIKKIILGYPKHMNNDIGIKAKISNYFKKTLENKFGQVKVILWDERLSTVQAIQILKTNNKKKGKILQMKDEIAASIILQNYLDYIKLHPNKEN.

It belongs to the YqgF nuclease family.

It is found in the cytoplasm. Could be a nuclease involved in processing of the 5'-end of pre-16S rRNA. The sequence is that of Putative pre-16S rRNA nuclease from Aster yellows witches'-broom phytoplasma (strain AYWB).